The chain runs to 124 residues: UPF0225 protein SCO1677 (124 aa).

It belongs to the UPF0225 family.

The sequence is that of UPF0225 protein SCO1677 from Streptomyces coelicolor (strain ATCC BAA-471 / A3(2) / M145).